The following is a 323-amino-acid chain: Fructose-1,6-bisphosphatase class 1 (323 aa).

Residues Glu88, Asp107, Leu109, and Asp110 each coordinate Mg(2+). Substrate contacts are provided by residues 110–113 (DGSS) and Asn200. Glu272 is a binding site for Mg(2+).

Belongs to the FBPase class 1 family. Homotetramer. It depends on Mg(2+) as a cofactor.

It localises to the cytoplasm. It catalyses the reaction beta-D-fructose 1,6-bisphosphate + H2O = beta-D-fructose 6-phosphate + phosphate. Its pathway is carbohydrate biosynthesis; gluconeogenesis. This is Fructose-1,6-bisphosphatase class 1 from Acinetobacter baumannii (strain ATCC 17978 / DSM 105126 / CIP 53.77 / LMG 1025 / NCDC KC755 / 5377).